Consider the following 219-residue polypeptide: Pyridoxine/pyridoxamine 5'-phosphate oxidase (219 aa).

Residues 13-16 (RVEY) and Lys76 contribute to the substrate site. Residues 71–76 (RSVLCK), 86–87 (FT), Lys93, and Gln115 each bind FMN. The substrate site is built by Tyr133, Arg137, and Ser141. FMN-binding positions include 150–151 (QS) and Trp196. Position 202-204 (202-204 (RVH)) interacts with substrate. Arg206 serves as a coordination point for FMN.

The protein belongs to the pyridoxamine 5'-phosphate oxidase family. In terms of assembly, homodimer. The cofactor is FMN.

The catalysed reaction is pyridoxamine 5'-phosphate + O2 + H2O = pyridoxal 5'-phosphate + H2O2 + NH4(+). It carries out the reaction pyridoxine 5'-phosphate + O2 = pyridoxal 5'-phosphate + H2O2. The protein operates within cofactor metabolism; pyridoxal 5'-phosphate salvage; pyridoxal 5'-phosphate from pyridoxamine 5'-phosphate: step 1/1. It participates in cofactor metabolism; pyridoxal 5'-phosphate salvage; pyridoxal 5'-phosphate from pyridoxine 5'-phosphate: step 1/1. Functionally, catalyzes the oxidation of either pyridoxine 5'-phosphate (PNP) or pyridoxamine 5'-phosphate (PMP) into pyridoxal 5'-phosphate (PLP). This Mycobacterium leprae (strain TN) protein is Pyridoxine/pyridoxamine 5'-phosphate oxidase.